The chain runs to 663 residues: Zyxin (663 aa).

Positions 35–438 (PPKPKINPFK…QQDQTLGSQG (404 aa)) are disordered. Composition is skewed to pro residues over residues 122–148 (FPPP…PPPL) and 160–211 (VPVP…PPSV). Residues 298–314 (PQKTTEPPAEASQSSPK) are compositionally biased toward polar residues. Basic and acidic residues-rich tracts occupy residues 342–353 (QRERPRVLEKPR) and 360–375 (EPEH…ERTR). 2 stretches are compositionally biased toward polar residues: residues 377 to 393 (LGPQ…QSTG) and 427 to 438 (TGQQDQTLGSQG). LIM zinc-binding domains follow at residues 470 to 531 (ELCG…TLEC), 532 to 589 (CAVC…RRYA), and 590 to 660 (PRCC…RARA).

This sequence belongs to the zyxin/ajuba family. As to quaternary structure, interacts (via LIM2 domain) with hesx1/anf1. As to expression, at the early gastrula stage, expressed at a low level in the animal hemisphere. Expression rises by the end of gastrulation in the anterior part of the embryo, where it gradually increases by the midneurula stage. During neurulation, expression continues most intensively in the anterior part of the neural plate and around it. At later stages, intensely expressed in the brain and at lower levels in the spinal cord, eyes, nasal placodes, within somites, and around the cement gland.

It localises to the cytoplasm. It is found in the cytoskeleton. Its subcellular location is the cell junction. The protein localises to the focal adhesion. Its function is as follows. Adhesion plaque protein. May be a component of a signal transduction pathway that mediates adhesion-stimulated changes in gene expression. Suppresses the transcription-repressing activity of hesx1/anf1. The polypeptide is Zyxin (Xenopus laevis (African clawed frog)).